We begin with the raw amino-acid sequence, 699 residues long: Cell pattern formation-associated protein StuA (699 aa).

Disordered regions lie at residues 1 to 20 (MDGT…LLAP) and 31 to 97 (TPQF…QPEH). Low complexity predominate over residues 32-49 (PQFKSQQSQPQSQSQYPS). The span at 52–61 (NPDSYSSSSP) shows a compositional bias: polar residues. Residues 75-84 (EDGEDYDQEE) show a composition bias toward acidic residues. The region spanning 226–332 (RVTATLWEDE…HNIGALLYHP (107 aa)) is the HTH APSES-type domain. The segment at residues 260-281 (GTKLLNVAGMTRGRRDGILKSE) is a DNA-binding region (H-T-H motif). Disordered regions lie at residues 372-594 (AMPT…MNSM), 599-618 (RRDD…DLNN), and 674-699 (PSYP…QSFG). Positions 376-423 (GYTSQQPLTNGHQSMANTPQPLTNGSQPPMNGSQTPMNGPQPPMQNGG) are enriched in polar residues. 2 stretches are compositionally biased toward basic and acidic residues: residues 428–438 (RVREDDDDLHR) and 478–491 (GLKR…DMHR). Residues 520–529 (NLHQPLSNGD) are compositionally biased toward polar residues. Over residues 535–545 (RGRDDDDDVHR) the composition is skewed to basic and acidic residues. Residues 566–594 (TSTSNDMLPQSPYYTLSNGAYQGPMMNSM) show a composition bias toward polar residues. The tract at residues 669 to 695 (TVAVSPSYPAGPGYELARPVTNVPRRQ) is nuclear localization domain.

Belongs to the EFG1/PHD1/stuA family.

The protein resides in the nucleus. Its function is as follows. Transcription factor that regulates asexual reproduction. Binds the StuA-response elements (StRE) with the consensus sequence 5'-(A/T)CGCG(T/A)N(A/C)-3' at the promoters of target genes. Controls the expression of the gene clusters involved in the production of deoxynivalenol (DON) and 15-acetyldeoxynivalenol (15ADON). Regulates the expression of genes involved in chitin and glucan metabolism. Also controls catalase activity and cell surface hydrophobicity. Plays an important role in pathogenicity. The polypeptide is Cell pattern formation-associated protein StuA (Gibberella zeae (strain ATCC MYA-4620 / CBS 123657 / FGSC 9075 / NRRL 31084 / PH-1) (Wheat head blight fungus)).